Here is a 266-residue protein sequence, read N- to C-terminus: Signal peptidase I (266 aa).

Topologically, residues 1-20 (MQTDNTKSNTNKTAKQEWGS) are cytoplasmic. The chain crosses the membrane as a helical span at residues 21 to 41 (FAFVICIALLIRILIMEPFNV). The Extracellular portion of the chain corresponds to 42–266 (PTGSMKATIL…IFRNLYNTDA (225 aa)). Active-site residues include Ser45 and Lys108.

The protein belongs to the peptidase S26 family.

It is found in the cell membrane. It carries out the reaction Cleavage of hydrophobic, N-terminal signal or leader sequences from secreted and periplasmic proteins.. The polypeptide is Signal peptidase I (lepB) (Rickettsia conorii (strain ATCC VR-613 / Malish 7)).